Consider the following 360-residue polypeptide: Phospho-N-acetylmuramoyl-pentapeptide-transferase (360 aa).

Helical transmembrane passes span 21–41 (YITFRSIMALLTALIIGLWIG), 73–93 (TMGGIMILFAIGVSTLLWADL), 98–118 (VWFVLFILFGYGVVGFVDDYW), 132–152 (WKYFWLSVIALVSAFGMYAIG), 168–188 (VMPQLGLFYIVLTYFVIVGTS), 199–219 (GLAIVPLIMVAGAFALIAWAT), 236–256 (SGELVILCTAIVGAGLGFLWF), 263–283 (VFMGDVGSLSLGGALGVIAVL), 288–308 (LLLVVMGGVFVVEALSVILQV), and 338–358 (VIVRFWIITLMLVLIGLVTLK).

It belongs to the glycosyltransferase 4 family. MraY subfamily. Mg(2+) serves as cofactor.

The protein resides in the cell inner membrane. The catalysed reaction is UDP-N-acetyl-alpha-D-muramoyl-L-alanyl-gamma-D-glutamyl-meso-2,6-diaminopimeloyl-D-alanyl-D-alanine + di-trans,octa-cis-undecaprenyl phosphate = di-trans,octa-cis-undecaprenyl diphospho-N-acetyl-alpha-D-muramoyl-L-alanyl-D-glutamyl-meso-2,6-diaminopimeloyl-D-alanyl-D-alanine + UMP. It functions in the pathway cell wall biogenesis; peptidoglycan biosynthesis. In terms of biological role, catalyzes the initial step of the lipid cycle reactions in the biosynthesis of the cell wall peptidoglycan: transfers peptidoglycan precursor phospho-MurNAc-pentapeptide from UDP-MurNAc-pentapeptide onto the lipid carrier undecaprenyl phosphate, yielding undecaprenyl-pyrophosphoryl-MurNAc-pentapeptide, known as lipid I. This chain is Phospho-N-acetylmuramoyl-pentapeptide-transferase, found in Glaesserella parasuis serovar 5 (strain SH0165) (Haemophilus parasuis).